Reading from the N-terminus, the 511-residue chain is Limonoid UDP-glucosyltransferase (511 aa).

The active-site Proton acceptor is histidine 19. Histidine 19 provides a ligand contact to an anthocyanidin. 6 residues coordinate UDP-alpha-D-glucose: glutamine 344, histidine 359, tryptophan 362, asparagine 363, serine 364, and glutamate 367. Glycine 382 serves as a coordination point for an anthocyanidin. 2 residues coordinate UDP-alpha-D-glucose: aspartate 383 and glutamine 384.

This sequence belongs to the UDP-glycosyltransferase family.

It carries out the reaction limonin + UDP-alpha-D-glucose + H2O = limonin 17-beta-D-glucoside + UDP + 2 H(+). Functionally, involved in the glucosylation of limonoids. The protein is Limonoid UDP-glucosyltransferase of Citrus unshiu (Satsuma mandarin).